The primary structure comprises 467 residues: Dimethylamine methyltransferase MtbB1 (467 aa).

O356 is a non-standard amino acid (pyrrolysine).

It belongs to the dimethylamine methyltransferase family. As to quaternary structure, may form homotetramers or homopentamers.

The catalysed reaction is Co(I)-[dimethylamine-specific corrinoid protein] + dimethylamine + H(+) = methyl-Co(III)-[dimethylamine-specific corrinoid protein] + methylamine. It participates in one-carbon metabolism; methanogenesis from dimethylamine. In terms of biological role, catalyzes the transfer of a methyl group from dimethylamine to the corrinoid cofactor of MtbC. The major or perhaps only DMA methyltransferase expressed under inducing conditions. The sequence is that of Dimethylamine methyltransferase MtbB1 from Methanosarcina barkeri.